The chain runs to 149 residues: Oligosaccharyltransferase complex subunit OSTC (149 aa).

At 1-32 (METLYRVPFLVLECPNLKLKKPPWLHMPSAMT) the chain is on the cytoplasmic side. A helical transmembrane segment spans residues 33-53 (VYALVVVSYFLITGGIIYDVI). Over 54 to 83 (VEPPSVGSMTDEHGHQRPVAFLAYRVNGQY) the chain is Extracellular. A helical transmembrane segment spans residues 84–104 (IMEGLASSFLFTMGGLGFIIL). At 105-117 (DRSNAPNIPKLNR) the chain is on the cytoplasmic side. The helical transmembrane segment at 118 to 138 (FLLLFIGFVCVLLSFFMARVF) threads the bilayer. At 139–149 (MRMKLPGYLMG) the chain is on the extracellular side.

This sequence belongs to the OSTC family. As to quaternary structure, component of STT3A-containing oligosaccharyl transferase (OST-A) complex. STT3A-containing complex assembly occurs through the formation of 3 subcomplexes. Subcomplex 1 contains RPN1 and TMEM258, subcomplex 2 contains the STT3A-specific subunits STT3A, DC2/OSTC, and KCP2 as well as the core subunit OST4, and subcomplex 3 contains RPN2, DAD1, and OST48. The OST-A complex can form stable complexes with the Sec61 complex or with both the Sec61 and TRAP complexes. Interacts with PSEN1 and NCSTN; indicative for an association with the gamma-secretase complex.

It localises to the endoplasmic reticulum. The protein resides in the membrane. The protein operates within protein modification; protein glycosylation. Subunit of STT3A-containing oligosaccharyl transferase (OST-A) complex that catalyzes the initial transfer of a defined glycan (Glc(3)Man(9)GlcNAc(2) in eukaryotes) from the lipid carrier dolichol-pyrophosphate to an asparagine residue within an Asn-X-Ser/Thr consensus motif in nascent polypeptide chains, the first step in protein N-glycosylation. N-glycosylation occurs cotranslationally and the complex associates with the Sec61 complex at the channel-forming translocon complex that mediates protein translocation across the endoplasmic reticulum (ER). Within the OST-A complex, acts as an adapter that anchors the OST-A complex to the Sec61 complex. May be involved in N-glycosylation of APP (amyloid-beta precursor protein). Can modulate gamma-secretase cleavage of APP by enhancing endoprotelysis of PSEN1. This chain is Oligosaccharyltransferase complex subunit OSTC, found in Homo sapiens (Human).